We begin with the raw amino-acid sequence, 455 residues long: tRNA-2-methylthio-N(6)-dimethylallyladenosine synthase (455 aa).

Residues 18 to 136 (KLFFIQTYGC…FPEYLNRVKT (119 aa)) enclose the MTTase N-terminal domain. [4Fe-4S] cluster is bound by residues C27, C63, C97, C173, C177, and C180. The Radical SAM core domain occupies 159–389 (RKSDIKGFVT…VEIVNTGIAK (231 aa)). Residues 392-455 (KDAEGKIYEV…SFSLIGEVEK (64 aa)) form the TRAM domain.

This sequence belongs to the methylthiotransferase family. MiaB subfamily. In terms of assembly, monomer. The cofactor is [4Fe-4S] cluster.

Its subcellular location is the cytoplasm. The catalysed reaction is N(6)-dimethylallyladenosine(37) in tRNA + (sulfur carrier)-SH + AH2 + 2 S-adenosyl-L-methionine = 2-methylsulfanyl-N(6)-dimethylallyladenosine(37) in tRNA + (sulfur carrier)-H + 5'-deoxyadenosine + L-methionine + A + S-adenosyl-L-homocysteine + 2 H(+). Catalyzes the methylthiolation of N6-(dimethylallyl)adenosine (i(6)A), leading to the formation of 2-methylthio-N6-(dimethylallyl)adenosine (ms(2)i(6)A) at position 37 in tRNAs that read codons beginning with uridine. The chain is tRNA-2-methylthio-N(6)-dimethylallyladenosine synthase from Clostridium beijerinckii (strain ATCC 51743 / NCIMB 8052) (Clostridium acetobutylicum).